Consider the following 306-residue polypeptide: Curved DNA-binding protein (306 aa).

The region spanning 5-69 is the J domain; sequence DYYAIMGVKP…QRRAEYDQMW (65 aa).

The protein localises to the cytoplasm. The protein resides in the nucleoid. Functionally, DNA-binding protein that preferentially recognizes a curved DNA sequence. It is probably a functional analog of DnaJ; displays overlapping activities with DnaJ, but functions under different conditions, probably acting as a molecular chaperone in an adaptive response to environmental stresses other than heat shock. Lacks autonomous chaperone activity; binds native substrates and targets them for recognition by DnaK. Its activity is inhibited by the binding of CbpM. The protein is Curved DNA-binding protein of Escherichia fergusonii (strain ATCC 35469 / DSM 13698 / CCUG 18766 / IAM 14443 / JCM 21226 / LMG 7866 / NBRC 102419 / NCTC 12128 / CDC 0568-73).